Here is a 157-residue protein sequence, read N- to C-terminus: Small ribosomal subunit protein uS7 (157 aa).

Belongs to the universal ribosomal protein uS7 family. In terms of assembly, part of the 30S ribosomal subunit. Contacts proteins S9 and S11.

One of the primary rRNA binding proteins, it binds directly to 16S rRNA where it nucleates assembly of the head domain of the 30S subunit. Is located at the subunit interface close to the decoding center, probably blocks exit of the E-site tRNA. The protein is Small ribosomal subunit protein uS7 of Akkermansia muciniphila (strain ATCC BAA-835 / DSM 22959 / JCM 33894 / BCRC 81048 / CCUG 64013 / CIP 107961 / Muc).